Here is a 50-residue protein sequence, read N- to C-terminus: Sperm protamine P1 (50 aa).

Belongs to the protamine P1 family. In terms of tissue distribution, testis.

The protein resides in the nucleus. It localises to the chromosome. In terms of biological role, protamines substitute for histones in the chromatin of sperm during the haploid phase of spermatogenesis. They compact sperm DNA into a highly condensed, stable and inactive complex. This Trachypithecus vetulus (Purple-faced langur) protein is Sperm protamine P1 (PRM1).